Reading from the N-terminus, the 302-residue chain is MTEQFDKTYCGFIAIVGRPNVGKSTLLNKILGQKISITSRKAQTTRHRIVGIKTEGAYQEIYVDTPGLHIEEKRAINRLMNRAASSAIGDVDLIIFVVDGTHWNADDEMVLNKLRNAKAPVVLAINKVDNIKNKDDLLPFITDLSSKFNFAHIVPISAQRGNNVHELEKIVRQSLREGVHHFPEDYVTDRSQRFMASEIIREKLMRFTGEELPYSVTVEIEQFKVNERGTYEINGLILVEREGQKKMVIGAGGQKIKTIGMEARADMERLFDNKVHLELWVKVKSGWADDERALRSLGYMDE.

Positions 9-177 (YCGFIAIVGR…EKIVRQSLRE (169 aa)) constitute an Era-type G domain. The G1 stretch occupies residues 17–24 (GRPNVGKS). Position 17 to 24 (17 to 24 (GRPNVGKS)) interacts with GTP. The segment at 43 to 47 (QTTRH) is G2. Residues 64–67 (DTPG) form a G3 region. Residues 64-68 (DTPGL) and 126-129 (NKVD) contribute to the GTP site. The interval 126-129 (NKVD) is G4. Positions 156–158 (ISA) are G5. One can recognise a KH type-2 domain in the interval 208–285 (TGEELPYSVT…HLELWVKVKS (78 aa)).

Belongs to the TRAFAC class TrmE-Era-EngA-EngB-Septin-like GTPase superfamily. Era GTPase family. Monomer.

It is found in the cytoplasm. The protein localises to the cell inner membrane. In terms of biological role, an essential GTPase that binds both GDP and GTP, with rapid nucleotide exchange. Plays a role in 16S rRNA processing and 30S ribosomal subunit biogenesis and possibly also in cell cycle regulation and energy metabolism. The chain is GTPase Era from Haemophilus influenzae (strain PittGG).